Consider the following 432-residue polypeptide: Glutamyl-tRNA reductase (432 aa).

Residues 49 to 52 (TCNR), S109, 114 to 116 (EGQ), and Q120 contribute to the substrate site. C50 functions as the Nucleophile in the catalytic mechanism. 198-203 (GAGRMS) provides a ligand contact to NADP(+).

This sequence belongs to the glutamyl-tRNA reductase family. As to quaternary structure, homodimer.

It catalyses the reaction (S)-4-amino-5-oxopentanoate + tRNA(Glu) + NADP(+) = L-glutamyl-tRNA(Glu) + NADPH + H(+). The protein operates within porphyrin-containing compound metabolism; protoporphyrin-IX biosynthesis; 5-aminolevulinate from L-glutamyl-tRNA(Glu): step 1/2. It functions in the pathway porphyrin-containing compound metabolism; chlorophyll biosynthesis. Its function is as follows. Catalyzes the NADPH-dependent reduction of glutamyl-tRNA(Glu) to glutamate 1-semialdehyde (GSA). In Synechococcus sp. (strain CC9605), this protein is Glutamyl-tRNA reductase.